The primary structure comprises 299 residues: MATH domain and coiled-coil domain-containing protein At2g42460 (299 aa).

The 124-residue stretch at 7–130 (QKTFTWKIEN…NNTLFIEVYI (124 aa)) folds into the MATH domain. Residues 225-262 (FRVKWLKSKLDEISLARKKKVDADAARVQELEGKVKNQ) adopt a coiled-coil conformation.

This is MATH domain and coiled-coil domain-containing protein At2g42460 from Arabidopsis thaliana (Mouse-ear cress).